The sequence spans 631 residues: Phosphomethylpyrimidine synthase (631 aa).

Substrate-binding positions include Asn239, Met268, Tyr297, His333, 353–355 (SRG), 394–397 (DGLR), and Glu433. His437 lines the Zn(2+) pocket. Position 460 (Tyr460) interacts with substrate. A Zn(2+)-binding site is contributed by His501. Cys581, Cys584, and Cys589 together coordinate [4Fe-4S] cluster.

It belongs to the ThiC family. Homodimer. The cofactor is [4Fe-4S] cluster.

It carries out the reaction 5-amino-1-(5-phospho-beta-D-ribosyl)imidazole + S-adenosyl-L-methionine = 4-amino-2-methyl-5-(phosphooxymethyl)pyrimidine + CO + 5'-deoxyadenosine + formate + L-methionine + 3 H(+). The protein operates within cofactor biosynthesis; thiamine diphosphate biosynthesis. Catalyzes the synthesis of the hydroxymethylpyrimidine phosphate (HMP-P) moiety of thiamine from aminoimidazole ribotide (AIR) in a radical S-adenosyl-L-methionine (SAM)-dependent reaction. The sequence is that of Phosphomethylpyrimidine synthase from Shigella boydii serotype 4 (strain Sb227).